We begin with the raw amino-acid sequence, 234 residues long: Methylamine utilization ferredoxin-type protein MauM (234 aa).

4Fe-4S ferredoxin-type domains are found at residues 61 to 91 (ALAEKDFQSACVRCGLCVEDCPFDILKLASW), 98 to 131 (GTPFFTARDEPCRMCQDIPCVRACPTGALNPLLT), 140 to 176 (VAVLVDHETCLNYKGLNCSICVRVCPIRGEAISLKPI), and 184 to 215 (QIPTVDSTKCTGCGTCEKHCVLSEAAIRVLPR). Positions 71, 74, 77, 81, 109, 112, 117, 121, 149, 157, 160, 164, 193, 196, 199, and 203 each coordinate [4Fe-4S] cluster.

It participates in one-carbon metabolism; methylamine degradation. Its function is as follows. Involved in electron transfer. This Methylobacillus flagellatus (strain ATCC 51484 / DSM 6875 / VKM B-1610 / KT) protein is Methylamine utilization ferredoxin-type protein MauM (mauM).